The following is a 257-amino-acid chain: Acetyl-coenzyme A carboxylase carboxyl transferase subunit beta 1 (257 aa).

Residues 1–257 (MNINDIFLKR…KMHVNTGGEA (257 aa)) form the CoA carboxyltransferase N-terminal domain.

Belongs to the AccD/PCCB family. In terms of assembly, acetyl-CoA carboxylase is a heterohexamer composed of biotin carboxyl carrier protein (AccB), biotin carboxylase (AccC) and two subunits each of ACCase subunit alpha (AccA) and ACCase subunit beta (AccD).

It localises to the cytoplasm. The enzyme catalyses N(6)-carboxybiotinyl-L-lysyl-[protein] + acetyl-CoA = N(6)-biotinyl-L-lysyl-[protein] + malonyl-CoA. The protein operates within lipid metabolism; malonyl-CoA biosynthesis; malonyl-CoA from acetyl-CoA: step 1/1. Component of the acetyl coenzyme A carboxylase (ACC) complex. Biotin carboxylase (BC) catalyzes the carboxylation of biotin on its carrier protein (BCCP) and then the CO(2) group is transferred by the transcarboxylase to acetyl-CoA to form malonyl-CoA. The protein is Acetyl-coenzyme A carboxylase carboxyl transferase subunit beta 1 of Lachnospira eligens (strain ATCC 27750 / DSM 3376 / VPI C15-48 / C15-B4) (Eubacterium eligens).